We begin with the raw amino-acid sequence, 181 residues long: tRNA-splicing endonuclease (181 aa).

Residues Tyr-118, His-126, and Lys-157 contribute to the active site.

Belongs to the tRNA-intron endonuclease family. Archaeal short subfamily. In terms of assembly, homotetramer; although the tetramer contains four active sites, only two participate in the cleavage. Therefore, it should be considered as a dimer of dimers.

The catalysed reaction is pretRNA = a 3'-half-tRNA molecule with a 5'-OH end + a 5'-half-tRNA molecule with a 2',3'-cyclic phosphate end + an intron with a 2',3'-cyclic phosphate and a 5'-hydroxyl terminus.. Its function is as follows. Endonuclease that removes tRNA introns. Cleaves pre-tRNA at the 5'- and 3'-splice sites to release the intron. The products are an intron and two tRNA half-molecules bearing 2',3' cyclic phosphate and 5'-OH termini. Recognizes a pseudosymmetric substrate in which 2 bulged loops of 3 bases are separated by a stem of 4 bp. The protein is tRNA-splicing endonuclease of Hyperthermus butylicus (strain DSM 5456 / JCM 9403 / PLM1-5).